Consider the following 969-residue polypeptide: Isoleucine--tRNA ligase (969 aa).

The 'HIGH' region signature appears at Pro-68–His-78. Glu-585 contacts L-isoleucyl-5'-AMP. The 'KMSKS' region signature appears at Lys-626–Ser-630. Residue Lys-629 participates in ATP binding. 4 residues coordinate Zn(2+): Cys-939, Cys-942, Cys-959, and Cys-962.

Belongs to the class-I aminoacyl-tRNA synthetase family. IleS type 1 subfamily. Monomer. Zn(2+) serves as cofactor.

It localises to the cytoplasm. It catalyses the reaction tRNA(Ile) + L-isoleucine + ATP = L-isoleucyl-tRNA(Ile) + AMP + diphosphate. In terms of biological role, catalyzes the attachment of isoleucine to tRNA(Ile). As IleRS can inadvertently accommodate and process structurally similar amino acids such as valine, to avoid such errors it has two additional distinct tRNA(Ile)-dependent editing activities. One activity is designated as 'pretransfer' editing and involves the hydrolysis of activated Val-AMP. The other activity is designated 'posttransfer' editing and involves deacylation of mischarged Val-tRNA(Ile). This Prochlorococcus marinus (strain MIT 9211) protein is Isoleucine--tRNA ligase.